A 438-amino-acid chain; its full sequence is Argininosuccinate lyase (438 aa).

It belongs to the lyase 1 family. Argininosuccinate lyase subfamily.

It localises to the cytoplasm. It catalyses the reaction 2-(N(omega)-L-arginino)succinate = fumarate + L-arginine. Its pathway is amino-acid biosynthesis; L-arginine biosynthesis; L-arginine from L-ornithine and carbamoyl phosphate: step 3/3. In Clostridium kluyveri (strain NBRC 12016), this protein is Argininosuccinate lyase.